Here is a 245-residue protein sequence, read N- to C-terminus: Geranylgeranylglyceryl phosphate synthase (245 aa).

Positions 22 and 51 each coordinate Mg(2+). Sn-glycerol 1-phosphate contacts are provided by residues 169–175, 200–201, and 222–223; these read YLEAGSG, GG, and GT.

The protein belongs to the GGGP/HepGP synthase family. Group II subfamily. Homotetramer. Homohexamer. Requires Mg(2+) as cofactor.

Its subcellular location is the cytoplasm. The catalysed reaction is sn-glycerol 1-phosphate + (2E,6E,10E)-geranylgeranyl diphosphate = sn-3-O-(geranylgeranyl)glycerol 1-phosphate + diphosphate. It functions in the pathway membrane lipid metabolism; glycerophospholipid metabolism. Prenyltransferase that catalyzes the transfer of the geranylgeranyl moiety of geranylgeranyl diphosphate (GGPP) to the C3 hydroxyl of sn-glycerol-1-phosphate (G1P). This reaction is the first ether-bond-formation step in the biosynthesis of archaeal membrane lipids. The chain is Geranylgeranylglyceryl phosphate synthase from Methanothermobacter thermautotrophicus (strain ATCC 29096 / DSM 1053 / JCM 10044 / NBRC 100330 / Delta H) (Methanobacterium thermoautotrophicum).